Here is a 379-residue protein sequence, read N- to C-terminus: Homoserine O-succinyltransferase (379 aa).

Positions 51 to 360 (NAVLICHALS…DAPQGHDAFL (310 aa)) constitute an AB hydrolase-1 domain. Ser157 serves as the catalytic Nucleophile. A substrate-binding site is contributed by Arg227. Catalysis depends on residues Asp323 and His356. Asp357 is a binding site for substrate.

Belongs to the AB hydrolase superfamily. MetX family. In terms of assembly, homodimer.

It is found in the cytoplasm. The enzyme catalyses L-homoserine + succinyl-CoA = O-succinyl-L-homoserine + CoA. Its pathway is amino-acid biosynthesis; L-methionine biosynthesis via de novo pathway; O-succinyl-L-homoserine from L-homoserine: step 1/1. With respect to regulation, requires MetW for activity. Its function is as follows. Transfers a succinyl group from succinyl-CoA to L-homoserine, forming succinyl-L-homoserine. The polypeptide is Homoserine O-succinyltransferase (Pseudomonas syringae pv. syringae (strain B728a)).